Consider the following 323-residue polypeptide: MAREEKPRKVILVGDGAVGSTFAFSMVQQGIAEELGIIDIAKEHVEGDAIDLADATPWTSPKNIYAADYPDCKDADLVVITAGAPQKPGETRLDLVNKNLKILSSIVEPVVESGFEGIFLVVANPVDILTHATWRMSGFPKDRVIGSGTSLDTGRLQKVIGKMENVDPSSVNAYMLGEHGDTEFPAWSYNNVAGVKVADWVKAHNMPESKLEDIHQEVKDMAYDIINKKGATFYGIGTASAMIAKAILNDEHRVLPLSVPMDGEYGLHDLHIGTPAVVGRKGLEQVIEMPLSDKEQELMTASADQLKKVMDKAFKETGVKVRQ.

Residues valine 18, aspartate 39, tyrosine 69, and 83–84 (GA) contribute to the NAD(+) site. Positions 86 and 92 each coordinate substrate. NAD(+)-binding positions include serine 105, 122-124 (VAN), and serine 147. 124-127 (NPVD) contacts substrate. 152–155 (DTGR) serves as a coordination point for substrate. The active-site Proton acceptor is histidine 179. Tyrosine 223 bears the Phosphotyrosine mark. Threonine 232 contributes to the substrate binding site.

Belongs to the LDH/MDH superfamily. LDH family. As to quaternary structure, homotetramer.

It is found in the cytoplasm. It catalyses the reaction (S)-lactate + NAD(+) = pyruvate + NADH + H(+). The protein operates within fermentation; pyruvate fermentation to lactate; (S)-lactate from pyruvate: step 1/1. With respect to regulation, under neutral conditions, the reaction is stimulated 4-fold by fructose 1,6-bisphosphate (FBP), however the L-lactate dehydrogenase is a nonallosteric enzyme. Calcium and zinc ions at 1 mM stimulate the activity almost 2-fold. Weakly inhibited by cadmium, cobalt and copper ions. In terms of biological role, catalyzes the conversion of lactate to pyruvate. This Lactobacillus helveticus (Lactobacillus suntoryeus) protein is L-lactate dehydrogenase.